The sequence spans 310 residues: Nodulation protein D 2 (310 aa).

The 58-residue stretch at 6-63 (LDLNLLVALDALMTERKLTAAARRVKLSQPAMSAAIARLRTYFGDELFSMQGRELIPT) folds into the HTH lysR-type domain. The H-T-H motif DNA-binding region spans 23-42 (LTAAARRVKLSQPAMSAAIA).

Belongs to the LysR transcriptional regulatory family.

In terms of biological role, nodD regulates the expression of the nodABCFE genes which encode other nodulation proteins. NodD is also a negative regulator of its own expression. Binds flavonoids as inducers. The chain is Nodulation protein D 2 (nodD2) from Rhizobium meliloti (strain 1021) (Ensifer meliloti).